The following is a 214-amino-acid chain: Ceramide-1-phosphate transfer protein (214 aa).

The an N-acylsphingoid base 1-phosphate site is built by Asp-56, Lys-60, Arg-106, Arg-110, and His-150.

This sequence belongs to the GLTP family.

The protein localises to the cytoplasm. The protein resides in the cytosol. Its subcellular location is the golgi apparatus. It localises to the trans-Golgi network membrane. It is found in the cell membrane. The protein localises to the endosome membrane. The protein resides in the nucleus outer membrane. It catalyses the reaction N-(hexadecanoyl)-sphing-4-enine-1-phosphate(in) = N-(hexadecanoyl)-sphing-4-enine-1-phosphate(out). The enzyme catalyses N-(9Z-octadecenoyl)-sphing-4-enine-1-phosphate(in) = N-(9Z-octadecenoyl)-sphing-4-enine-1-phosphate(out). In terms of biological role, mediates the intracellular transfer of ceramide-1-phosphate (C1P) between organelle membranes and the cell membrane. Required for normal structure of the Golgi stacks. Can bind phosphoceramides with a variety of aliphatic chains, but has a preference for lipids with saturated C16:0 or monounsaturated C18:1 aliphatic chains, and is inefficient with phosphoceramides containing lignoceryl (C24:0). Plays a role in the regulation of the cellular levels of ceramide-1-phosphate, and thereby contributes to the regulation of phospholipase PLA2G4A activity and the release of arachidonic acid. Has no activity with galactosylceramide, lactosylceramide, sphingomyelin, phosphatidylcholine, phosphatidic acid and ceramide. C1P transfer is stimulated by phosphatidylserine in C1P source vesicles. Regulates autophagy, inflammasome mediated IL1B and IL18 processing, and pyroptosis, but not apoptosis. This chain is Ceramide-1-phosphate transfer protein (CPTP), found in Bos taurus (Bovine).